The chain runs to 204 residues: Serotype 3 fimbrial subunit (204 aa).

A signal peptide spans 1-25 (MSKFSYPALRAALILAASPVLPALA). The cysteines at positions 41 and 84 are disulfide-linked.

It belongs to the fimbrial protein family.

It localises to the fimbrium. In terms of biological role, bordetella pertussis is the causative agent of whooping cough. An essential step in the disease process is the attachment of the bacteria to the ciliated epithelium of the respiratory tract, enabling the organism to resist normal host-clearance mechanisms. It is unclear which bacterial cell surface component are responsible for adherence but the fimbriae of B.pertussis are prime candidates for being involved in this process. This is Serotype 3 fimbrial subunit (fim3) from Bordetella pertussis (strain Tohama I / ATCC BAA-589 / NCTC 13251).